The following is a 519-amino-acid chain: RxLR effector protein PITG_15278 (519 aa).

The N-terminal stretch at 1 to 24 (MHFIYRVVLVLAAFALFKVDSISA) is a signal peptide. The RxLR-dEER signature appears at 49 to 59 (RQLRVMDDNER).

This sequence belongs to the RxLR effector family.

Its subcellular location is the secreted. It localises to the host cytoplasm. Effector that enhances P.infestans colonization of Nicotiana benthamiana leaves. This Phytophthora infestans (strain T30-4) (Potato late blight agent) protein is RxLR effector protein PITG_15278.